Reading from the N-terminus, the 54-residue chain is Ovomucoid (54 aa).

Residues Val-4–Cys-54 form the Kazal-like domain. 3 cysteine pairs are disulfide-bonded: Cys-6–Cys-36, Cys-14–Cys-33, and Cys-22–Cys-54. The N-linked (GlcNAc...) asparagine glycan is linked to Asn-43.

The protein localises to the secreted. The chain is Ovomucoid from Coloeus monedula (Eurasian jackdaw).